A 174-amino-acid chain; its full sequence is Gamma-crystallin C (174 aa).

Beta/gamma crystallin 'Greek key' domains lie at 2-40 and 41-83; these read GKIT…RVDS and GCWM…CLIP. The residue at position 23 (Cys-23) is an S-methylcysteine. The interval 84–87 is connecting peptide; that stretch reads QTSS. 2 Beta/gamma crystallin 'Greek key' domains span residues 88–128 and 129–171; these read HRLR…HVLE and GCWV…RRVV.

It belongs to the beta/gamma-crystallin family. Monomer.

Crystallins are the dominant structural components of the vertebrate eye lens. The sequence is that of Gamma-crystallin C (CRYGC) from Canis lupus familiaris (Dog).